Consider the following 234-residue polypeptide: O-antigen biosynthesis glycosyltransferase WbnI (234 aa).

Residues 8–13 (ICTGEY), 93–95 (NAV), and 115–118 (HPGY) each bind substrate. E185 acts as the Nucleophile in catalysis.

The protein belongs to the glycosyltransferase 6 family. Requires Mn(2+) as cofactor.

It catalyses the reaction alpha-L-Fuc-(1-&gt;2)-beta-D-Gal-(1-&gt;3)-alpha-D-GalNAc-(1-&gt;3)-alpha-D-GalNAc-di-trans,octa-cis-undecaprenyl diphosphate + UDP-alpha-D-galactose = alpha-L-Fuc-(1-&gt;2)-[alpha-D-Gal-(1-&gt;3)]-beta-D-Gal-(1-&gt;3)-alpha-D-GalNAc-(1-&gt;3)-alpha-D-GalNAc-di-trans,octa-cis-undecaprenyl diphosphate + UDP + H(+). It functions in the pathway bacterial outer membrane biogenesis; LPS O-antigen biosynthesis. Functionally, involved in the assembly of the O-repeating unit during O-antigen biosynthesis. The sequence is that of O-antigen biosynthesis glycosyltransferase WbnI from Escherichia coli.